A 921-amino-acid polypeptide reads, in one-letter code: Isoleucine--tRNA ligase (921 aa).

The 'HIGH' region motif lies at 57-67 (PYANGDIHMGH). Position 553 (E553) interacts with L-isoleucyl-5'-AMP. The 'KMSKS' region signature appears at 594–598 (KMSKS). K597 contributes to the ATP binding site.

This sequence belongs to the class-I aminoacyl-tRNA synthetase family. IleS type 1 subfamily. In terms of assembly, monomer.

The protein localises to the cytoplasm. The enzyme catalyses tRNA(Ile) + L-isoleucine + ATP = L-isoleucyl-tRNA(Ile) + AMP + diphosphate. Its function is as follows. Catalyzes the attachment of isoleucine to tRNA(Ile). As IleRS can inadvertently accommodate and process structurally similar amino acids such as valine, to avoid such errors it has two additional distinct tRNA(Ile)-dependent editing activities. One activity is designated as 'pretransfer' editing and involves the hydrolysis of activated Val-AMP. The other activity is designated 'posttransfer' editing and involves deacylation of mischarged Val-tRNA(Ile). This is Isoleucine--tRNA ligase from Bacillus subtilis (strain 168).